The chain runs to 543 residues: Glutamyl-tRNA(Gln) amidotransferase subunit A, chloroplastic/mitochondrial (543 aa).

Catalysis depends on charge relay system residues K123 and S198. The Acyl-ester intermediate role is filled by S222.

This sequence belongs to the amidase family. GatA subfamily. Subunit of the heterotrimeric GatCAB amidotransferase (AdT) complex, composed of A, B and C subunits.

It is found in the mitochondrion. Its subcellular location is the plastid. The protein localises to the chloroplast stroma. It catalyses the reaction L-glutamyl-tRNA(Gln) + L-glutamine + ATP + H2O = L-glutaminyl-tRNA(Gln) + L-glutamate + ADP + phosphate + H(+). In terms of biological role, allows the formation of correctly charged Gln-tRNA(Gln) through the transamidation of misacylated Glu-tRNA(Gln) in chloroplasts and mitochondria. The reaction takes place in the presence of glutamine and ATP through an activated gamma-phospho-Glu-tRNA(Gln). This Oryza sativa subsp. japonica (Rice) protein is Glutamyl-tRNA(Gln) amidotransferase subunit A, chloroplastic/mitochondrial.